We begin with the raw amino-acid sequence, 241 residues long: Endothelial protein C receptor (241 aa).

A signal peptide spans 1–17 (MLTTLLPLLPLLLPGWA). Topologically, residues 18-212 (LCSQEASDGP…GSQTGRSYTS (195 aa)) are extracellular. Residues Asn-49, Asn-66, Asn-138, and Asn-174 are each glycosylated (N-linked (GlcNAc...) asparagine). 2 cysteine pairs are disulfide-bonded: Cys-120-Cys-188 and Cys-221-Cys-234. Residues 213–233 (LVLGVLVGCFIVTGVAVGIFL) traverse the membrane as a helical segment. The Cytoplasmic segment spans residues 234–241 (CTGGRRRC).

As to expression, expressed in endothelial cells.

The protein localises to the membrane. Binds activated protein C. Enhances protein C activation by the thrombin-thrombomodulin complex; plays a role in the protein C pathway controlling blood coagulation. The chain is Endothelial protein C receptor (PROCR) from Bos taurus (Bovine).